The chain runs to 324 residues: Probable 6-phosphogluconolactonase 4, chloroplastic (324 aa).

A chloroplast-targeting transit peptide spans methionine 1–alanine 61. The segment at arginine 20 to histidine 43 is disordered. Low complexity predominate over residues proline 24 to arginine 34.

The protein belongs to the glucosamine/galactosamine-6-phosphate isomerase family. 6-phosphogluconolactonase subfamily.

It localises to the plastid. The protein localises to the chloroplast. It catalyses the reaction 6-phospho-D-glucono-1,5-lactone + H2O = 6-phospho-D-gluconate + H(+). The protein operates within carbohydrate degradation; pentose phosphate pathway; D-ribulose 5-phosphate from D-glucose 6-phosphate (oxidative stage): step 2/3. Functionally, hydrolysis of 6-phosphogluconolactone to 6-phosphogluconate. The chain is Probable 6-phosphogluconolactonase 4, chloroplastic from Oryza sativa subsp. indica (Rice).